A 555-amino-acid polypeptide reads, in one-letter code: Carboxysome assembly protein CcmM (555 aa).

The tract at residues methionine 1 to valine 209 is has carbonic anhydrase (CA) activity. Glutamate 56 acts as the Proton donor/acceptor in catalysis. Histidine 75, histidine 102, and histidine 107 together coordinate Zn(2+). Cysteine 194 and cysteine 200 are joined by a disulfide. The segment at serine 223–proline 315 is rbcS-like repeat 1, SSUL1. Disordered regions lie at residues threonine 323–alanine 351 and asparagine 441–alanine 464. 2 stretches are compositionally biased toward low complexity: residues serine 330 to alanine 351 and alanine 445 to alanine 464. Residues tyrosine 347–proline 440 form a rbcS-like repeat 2, SSUL2 region. Residues serine 460–proline 555 form a rbcS-like repeat 3, SSUL3 region.

The protein belongs to the gamma-class carbonic anhydrase family. As to quaternary structure, probable homotrimer; zinc is bound between adjacent monomers. Full length protein (M58) interacts with CcmN. The C-terminal RbcS-like domains (SSUL) bind to holo-RuBisCO, as does the M35 short form. The cofactor is Zn(2+). Post-translationally, the first amino acid of the short form (equivalent to Val-226) is not seen in Edman degradation, while Ser-230 may be post-translationally modified. Migrates in gels as 2 about equal forms of about 60 and 35 kDa (called M58 and M35). They are probably the result of alternative translation initiation.

The protein localises to the carboxysome. It localises to the cytoplasm. The catalysed reaction is hydrogencarbonate + H(+) = CO2 + H2O. With respect to regulation, carbonic anhydrase (CA) activity is probably under redox control to remain inactive in the cytoplasm. Carbonic anhydrase (CA) activity of full-length protein and N-terminal fragment is inhibited by ethoxyzolamide. N-terminal fragment CA activity is activated under oxidizing conditions and inhibited under reducing conditions. Its function is as follows. Functions as a scaffold protein for the assembly of beta-carboxysomes, initiates carboxysome assembly by coalescing RuBisCO (ribulose bisphosphate carboxylase, rbcL-rbcS). Produced as a full-length (M58) and a short form (M35), possibly by alternative translation initiation; probably both forms are required for correct carboxysome assembly and growth. In this strain both forms are equally abundant. Functionally, a moderately active carbonic anhydrase that catalyzes the reversible hydration of carbon dioxide. Essential to photosynthetic carbon dioxide fixation, supplies CO(2) to ribulose bisphosphate carboxylase (RuBisCO) in the carboxysome. Also hydrolyzes COS. Beta-carboxysome assembly initiates when soluble RuBisCO is condensed into a liquid matrix in a pre-carboxysome by the RbcS-like domains of probably both forms of CcmM. CcmN interacts with the N-terminus of full length CcmM, and then recruits the shell proteins (CcmK) via CcmN's encapsulation peptide. Shell formation requires both CcmK proteins and CcmO. CcmL caps the otherwise elongated carboxysome. Once fully encapsulated carboxysomes are formed, they migrate within the cell probably via interactions with the cytoskeleton. This Nostoc sp. (strain PCC 7120 / SAG 25.82 / UTEX 2576) protein is Carboxysome assembly protein CcmM.